Consider the following 324-residue polypeptide: GTPase Era (324 aa).

Residues 31-199 (KSGFIGIIGR…QELLVEHLEH (169 aa)) enclose the Era-type G domain. Positions 39 to 46 (GRPNVGKS) are G1. 39–46 (GRPNVGKS) lines the GTP pocket. Residues 65 to 69 (QTTRN) form a G2 region. Residues 86-89 (DTPG) form a G3 region. Residues 86-90 (DTPGI) and 148-151 (NKVD) each bind GTP. The tract at residues 148–151 (NKVD) is G4. Residues 178-180 (FSA) are G5. Residues 230-306 (TREEVPHSVA…YLELFVKVQP (77 aa)) enclose the KH type-2 domain.

The protein belongs to the TRAFAC class TrmE-Era-EngA-EngB-Septin-like GTPase superfamily. Era GTPase family. As to quaternary structure, monomer.

The protein resides in the cytoplasm. It localises to the cell inner membrane. An essential GTPase that binds both GDP and GTP, with rapid nucleotide exchange. Plays a role in 16S rRNA processing and 30S ribosomal subunit biogenesis and possibly also in cell cycle regulation and energy metabolism. The protein is GTPase Era of Nostoc sp. (strain PCC 7120 / SAG 25.82 / UTEX 2576).